Reading from the N-terminus, the 340-residue chain is Dihydroorotate dehydrogenase (quinone) (340 aa).

FMN is bound by residues 65–69 (AGLDK) and threonine 89. A substrate-binding site is contributed by lysine 69. Residue 114-118 (NRMGF) coordinates substrate. FMN-binding residues include asparagine 142 and asparagine 175. Residue asparagine 175 coordinates substrate. Serine 178 (nucleophile) is an active-site residue. A substrate-binding site is contributed by asparagine 180. Positions 220 and 248 each coordinate FMN. Position 249–250 (249–250 (NT)) interacts with substrate. FMN contacts are provided by residues glycine 271, glycine 300, and 321 to 322 (YT).

It belongs to the dihydroorotate dehydrogenase family. Type 2 subfamily. Monomer. FMN is required as a cofactor.

The protein resides in the cell membrane. The catalysed reaction is (S)-dihydroorotate + a quinone = orotate + a quinol. Its pathway is pyrimidine metabolism; UMP biosynthesis via de novo pathway; orotate from (S)-dihydroorotate (quinone route): step 1/1. In terms of biological role, catalyzes the conversion of dihydroorotate to orotate with quinone as electron acceptor. This Paraburkholderia xenovorans (strain LB400) protein is Dihydroorotate dehydrogenase (quinone).